The primary structure comprises 777 residues: Phosphoribosylformylglycinamidine synthase subunit PurL (777 aa).

Residue histidine 50 is part of the active site. ATP is bound by residues tyrosine 53 and lysine 92. Glutamate 94 is a binding site for Mg(2+). Residues 95–98 (SHNH) and arginine 117 contribute to the substrate site. Catalysis depends on histidine 96, which acts as the Proton acceptor. Aspartate 118 provides a ligand contact to Mg(2+). Glutamine 241 contributes to the substrate binding site. Aspartate 269 serves as a coordination point for Mg(2+). 313-315 (ESQ) is a substrate binding site. ATP-binding residues include aspartate 516 and glycine 553. Asparagine 554 is a binding site for Mg(2+). Residue serine 556 participates in substrate binding.

This sequence belongs to the FGAMS family. Monomer. Part of the FGAM synthase complex composed of 1 PurL, 1 PurQ and 2 PurS subunits.

The protein localises to the cytoplasm. The enzyme catalyses N(2)-formyl-N(1)-(5-phospho-beta-D-ribosyl)glycinamide + L-glutamine + ATP + H2O = 2-formamido-N(1)-(5-O-phospho-beta-D-ribosyl)acetamidine + L-glutamate + ADP + phosphate + H(+). Its pathway is purine metabolism; IMP biosynthesis via de novo pathway; 5-amino-1-(5-phospho-D-ribosyl)imidazole from N(2)-formyl-N(1)-(5-phospho-D-ribosyl)glycinamide: step 1/2. Its function is as follows. Part of the phosphoribosylformylglycinamidine synthase complex involved in the purines biosynthetic pathway. Catalyzes the ATP-dependent conversion of formylglycinamide ribonucleotide (FGAR) and glutamine to yield formylglycinamidine ribonucleotide (FGAM) and glutamate. The FGAM synthase complex is composed of three subunits. PurQ produces an ammonia molecule by converting glutamine to glutamate. PurL transfers the ammonia molecule to FGAR to form FGAM in an ATP-dependent manner. PurS interacts with PurQ and PurL and is thought to assist in the transfer of the ammonia molecule from PurQ to PurL. The polypeptide is Phosphoribosylformylglycinamidine synthase subunit PurL (Synechococcus elongatus (strain ATCC 33912 / PCC 7942 / FACHB-805) (Anacystis nidulans R2)).